Reading from the N-terminus, the 110-residue chain is Ribonuclease P protein component (110 aa).

It belongs to the RnpA family. As to quaternary structure, consists of a catalytic RNA component (M1 or rnpB) and a protein subunit.

It catalyses the reaction Endonucleolytic cleavage of RNA, removing 5'-extranucleotides from tRNA precursor.. Functionally, RNaseP catalyzes the removal of the 5'-leader sequence from pre-tRNA to produce the mature 5'-terminus. It can also cleave other RNA substrates such as 4.5S RNA. The protein component plays an auxiliary but essential role in vivo by binding to the 5'-leader sequence and broadening the substrate specificity of the ribozyme. This Mesoplasma florum (strain ATCC 33453 / NBRC 100688 / NCTC 11704 / L1) (Acholeplasma florum) protein is Ribonuclease P protein component.